The sequence spans 374 residues: Alanine racemase (374 aa).

Lys35 serves as the catalytic Proton acceptor; specific for D-alanine. N6-(pyridoxal phosphate)lysine is present on Lys35. Substrate is bound at residue Arg133. The active-site Proton acceptor; specific for L-alanine is Tyr264. Residue Met312 participates in substrate binding.

Belongs to the alanine racemase family. Pyridoxal 5'-phosphate serves as cofactor.

It carries out the reaction L-alanine = D-alanine. Its pathway is amino-acid biosynthesis; D-alanine biosynthesis; D-alanine from L-alanine: step 1/1. Catalyzes the interconversion of L-alanine and D-alanine. May also act on other amino acids. This is Alanine racemase (alr) from Thermobifida fusca (strain YX).